The primary structure comprises 106 residues: Minor capsid protein VP2 (106 aa).

The protein belongs to the vesivirus VP2 protein family. As to quaternary structure, homooligomer. The portal-like structure consists in 12 copies of VP2. Interacts with capsid protein VP1.

It localises to the virion. The protein localises to the host cytoplasm. Its function is as follows. Minor structural protein that forms a portal-like structure at a unique three-fold axis of symmetry, following binding to the host receptor. The virion attaches to feline junctional adhesion molecule A (F11R). Once attached, the virion is endocytosed. Acidification of the endosome induces conformational change of capsid protein thereby injecting virus genomic RNA into host cytoplasm. The channel formed by VP2 may allow the delivery of the viral genome through the host endosomal membrane. This Feline calicivirus (strain Cat/United States/Urbana/1960) (FCV) protein is Minor capsid protein VP2.